A 745-amino-acid polypeptide reads, in one-letter code: AP-3 complex subunit beta (745 aa).

Phosphoserine is present on Ser-638. Residues 674–745 form a disordered region; the sequence is YASETSESSE…TEPEPNYWQS (72 aa). The segment covering 680 to 718 has biased composition (acidic residues); the sequence is ESSEGEYETSTSESEDEETDDTSQEEDNEKNSTPDEDTE.

The protein belongs to the adaptor complexes large subunit family. Adaptor protein complex 3 (AP-3) is a heterotetramer composed of 2 large adaptins (apl5 and apl6), a medium adaptin (apm3) and a small adaptin (aps3).

Its subcellular location is the golgi apparatus. It is found in the cytoplasmic vesicle. It localises to the clathrin-coated vesicle membrane. Adaptins are components of the adaptor complexes which link clathrin to receptors in coated vesicles. Clathrin-associated protein complexes are believed to interact with the cytoplasmic tails of membrane proteins, leading to their selection and concentration. Beta adaptin is a subunit of the plasma membrane adaptor. The protein is AP-3 complex subunit beta (apl6) of Schizosaccharomyces pombe (strain 972 / ATCC 24843) (Fission yeast).